The following is a 144-amino-acid chain: uncharacterized protein (144 aa).

Residues 24-67 (KLKELYQRLNQGINVEEVLKETVEDYKEKMEKYILEVLEEIEKY) adopt a coiled-coil conformation.

This is an uncharacterized protein from Aquifex aeolicus (strain VF5).